Here is a 160-residue protein sequence, read N- to C-terminus: Ribosome maturation factor RimP (160 aa).

This sequence belongs to the RimP family.

It localises to the cytoplasm. Required for maturation of 30S ribosomal subunits. The polypeptide is Ribosome maturation factor RimP (Citrifermentans bemidjiense (strain ATCC BAA-1014 / DSM 16622 / JCM 12645 / Bem) (Geobacter bemidjiensis)).